A 139-amino-acid chain; its full sequence is FAD synthase (139 aa).

ATP is bound by residues 9–10 (TF), 14–17 (HPGH), and Asp-92.

The protein belongs to the archaeal FAD synthase family. Homodimer. The cofactor is a divalent metal cation.

The catalysed reaction is FMN + ATP + H(+) = FAD + diphosphate. It functions in the pathway cofactor biosynthesis; FAD biosynthesis; FAD from FMN: step 1/1. Functionally, catalyzes the transfer of the AMP portion of ATP to flavin mononucleotide (FMN) to produce flavin adenine dinucleotide (FAD) coenzyme. In Methanosarcina barkeri (strain Fusaro / DSM 804), this protein is FAD synthase.